A 333-amino-acid polypeptide reads, in one-letter code: MSAVLDKGSLVDVFSSPSVVFNQIREGYCAEFIVEPLRVGFGLTIGNAMRRVLLSSLSGFAISAVGIKGLTHEFSCIPGVREDFADLALNLKKVVLKSISGATCGNLHLSVTDGGAVFSNMISPSHDFEVVNGDLLICNVAEGVSLEMEMKVSSGFGYVSSVSVRKDEYDLEGAVPIDAIYNPVRAVNFTVKPTSAGSFAGHDKLILYVETNGAMDPKTAVLEASKILSTQARCFLNIADPEHRVHGVPCGVSTSDRNDASDLLSARIDRLYLSARARKCLNGENIVYIRDLVSRTEADLLKAPNFGRRSLEEVKKELFSKGLSLGMNLDSHG.

The alpha N-terminal domain (alpha-NTD) stretch occupies residues 1-239 (MSAVLDKGSL…TQARCFLNIA (239 aa)). An alpha C-terminal domain (alpha-CTD) region spans residues 259–333 (DASDLLSARI…SLGMNLDSHG (75 aa)).

It belongs to the RNA polymerase alpha chain family. Homodimer. The RNAP catalytic core consists of 2 alpha, 1 beta, 1 beta' and 1 omega subunit. When a sigma factor is associated with the core the holoenzyme is formed, which can initiate transcription.

The catalysed reaction is RNA(n) + a ribonucleoside 5'-triphosphate = RNA(n+1) + diphosphate. Functionally, DNA-dependent RNA polymerase catalyzes the transcription of DNA into RNA using the four ribonucleoside triphosphates as substrates. This Neorickettsia sennetsu (strain ATCC VR-367 / Miyayama) (Ehrlichia sennetsu) protein is DNA-directed RNA polymerase subunit alpha.